A 532-amino-acid chain; its full sequence is CTP synthase (532 aa).

An amidoligase domain region spans residues Met1 to Leu267. Position 13 (Ser13) interacts with CTP. Position 13 (Ser13) interacts with UTP. Ser14 to Ile19 is a binding site for ATP. Tyr54 contributes to the L-glutamine binding site. Asp71 serves as a coordination point for ATP. Positions 71 and 141 each coordinate Mg(2+). CTP is bound by residues Asp148–Glu150, Lys188–Gln193, and Lys224. Residues Lys188–Gln193 and Lys224 each bind UTP. One can recognise a Glutamine amidotransferase type-1 domain in the interval Arg292–Lys532. Gly354 is a binding site for L-glutamine. Catalysis depends on Cys381, which acts as the Nucleophile; for glutamine hydrolysis. Residues Leu382–Gln385, Glu405, and Arg462 contribute to the L-glutamine site. Active-site residues include His507 and Glu509.

The protein belongs to the CTP synthase family. In terms of assembly, homotetramer.

It carries out the reaction UTP + L-glutamine + ATP + H2O = CTP + L-glutamate + ADP + phosphate + 2 H(+). The catalysed reaction is L-glutamine + H2O = L-glutamate + NH4(+). The enzyme catalyses UTP + NH4(+) + ATP = CTP + ADP + phosphate + 2 H(+). It participates in pyrimidine metabolism; CTP biosynthesis via de novo pathway; CTP from UDP: step 2/2. Its activity is regulated as follows. Allosterically activated by GTP, when glutamine is the substrate; GTP has no effect on the reaction when ammonia is the substrate. The allosteric effector GTP functions by stabilizing the protein conformation that binds the tetrahedral intermediate(s) formed during glutamine hydrolysis. Inhibited by the product CTP, via allosteric rather than competitive inhibition. In terms of biological role, catalyzes the ATP-dependent amination of UTP to CTP with either L-glutamine or ammonia as the source of nitrogen. Regulates intracellular CTP levels through interactions with the four ribonucleotide triphosphates. In Listeria monocytogenes serotype 4b (strain F2365), this protein is CTP synthase.